The following is a 194-amino-acid chain: E3 ubiquitin-protein ligase RNF185 (194 aa).

Positions 1-27 (MASAAASESSSSSSSSSAGAANGQSAG) are enriched in low complexity. The disordered stretch occupies residues 1–32 (MASAAASESSSSSSSSSAGAANGQSAGESGGG). Positions 31 to 82 (GGGAQDSTFECNICLDTSKDAVISLCGHLFCWPCLHQWLETRPNRQVCPVCK) are required for ubiquitin ligase activity and protection against ER stress-induced cell death. Residues 41 to 82 (CNICLDTSKDAVISLCGHLFCWPCLHQWLETRPNRQVCPVCK) form an RING-type zinc finger. Residues 92-126 (PLYGRGSTGQQDPREKTPPRPQGQRPEPENRGGFQ) form a disordered region. The next 2 membrane-spanning stretches (helical) occupy residues 133–153 (GGFQ…ATAF) and 174–194 (QFLS…LLIA).

It localises to the mitochondrion outer membrane. It is found in the endoplasmic reticulum membrane. The enzyme catalyses S-ubiquitinyl-[E2 ubiquitin-conjugating enzyme]-L-cysteine + [acceptor protein]-L-lysine = [E2 ubiquitin-conjugating enzyme]-L-cysteine + N(6)-ubiquitinyl-[acceptor protein]-L-lysine.. It participates in protein modification; protein ubiquitination. E3 ubiquitin-protein ligase that regulates selective mitochondrial autophagy by mediating 'Lys-63'-linked polyubiquitination. Acts in the endoplasmic reticulum (ER)-associated degradation (ERAD) pathway, which targets misfolded proteins that accumulate in the endoplasmic reticulum (ER) for ubiquitination and subsequent proteasome-mediated degradation. Protects cells from ER stress-induced apoptosis. Responsible for the cotranslational ubiquitination and degradation of CFTR in the ERAD pathway. Also acts as a regulator of the innate antiviral response by catalyzing 'Lys-27'-linked polyubiquitination of CGAS, thereby promoting CGAS cyclic GMP-AMP synthase activity. Preferentially associates with the E2 enzymes UBE2J1 and UBE2J2. This is E3 ubiquitin-protein ligase RNF185 (rnf185) from Danio rerio (Zebrafish).